The chain runs to 475 residues: MSPKTETKASVGFKAGVKEYKLTYYTPEYETKDTDILAAFRVTPQPGVPPEEAGAAVAAESSTGTWTTVWTDGLTSLDRYKGRCYHIEPVPGEESQFIAYVAYPLDLFEEGSVTNMFTSIVGNVFGFKALRALRLEDLRIPTAYVKTFQGPPHGIQVERDKLNKYGRPLLGCTIKPKLGLSAKNYGRAVYECLRGGLDFTKDDENVNSQPFMRWRDRFLFCAEALYKAQAETGEIKGHYLNATAGTCEEMMKRAIFARELGVPIVMHDYLTGGFTANTSLAHYCRDNGLLLHIHRAMHAVIDRQKNHGIHFRVLAKALRMSGGDHIHSGTVVGKLEGERDITLGFVDLLRDDFIEKDRSRGIYFTQDWVSLPGVLPVASGGIHVWHMPALTEIFGDDSVLQFGGGTLGHPWGNAPGAVANRVALEACVQARNEGRDLASQGNEIIREASKWSPELAAACEVWKEIKFEFKAVDTL.

Residues 1-2 constitute a propeptide that is removed on maturation; sequence MS. P3 bears the N-acetylproline mark. K14 carries the post-translational modification N6,N6,N6-trimethyllysine. The substrate site is built by N123 and T173. K175 acts as the Proton acceptor in catalysis. Residue K177 participates in substrate binding. The Mg(2+) site is built by K201, D203, and E204. Position 201 is an N6-carboxylysine (K201). H294 acts as the Proton acceptor in catalysis. 3 residues coordinate substrate: R295, H327, and S379.

Belongs to the RuBisCO large chain family. Type I subfamily. Heterohexadecamer of 8 large chains and 8 small chains; disulfide-linked. The disulfide link is formed within the large subunit homodimers. Mg(2+) is required as a cofactor. The disulfide bond which can form in the large chain dimeric partners within the hexadecamer appears to be associated with oxidative stress and protein turnover.

The protein resides in the plastid. The protein localises to the chloroplast. It catalyses the reaction 2 (2R)-3-phosphoglycerate + 2 H(+) = D-ribulose 1,5-bisphosphate + CO2 + H2O. The enzyme catalyses D-ribulose 1,5-bisphosphate + O2 = 2-phosphoglycolate + (2R)-3-phosphoglycerate + 2 H(+). RuBisCO catalyzes two reactions: the carboxylation of D-ribulose 1,5-bisphosphate, the primary event in carbon dioxide fixation, as well as the oxidative fragmentation of the pentose substrate in the photorespiration process. Both reactions occur simultaneously and in competition at the same active site. This is Ribulose bisphosphate carboxylase large chain from Magnolia macrophylla (Bigleaf magnolia).